A 78-amino-acid chain; its full sequence is MICOS complex subunit MIC10 (78 aa).

At S2 the chain carries N-acetylserine. The helical transmembrane segment at 17–36 (AVVKIGTGFGLGIVFSLTFF) threads the bilayer. Over 37–78 (KRRMWPLAFGSGMGLGMAYSNCQHDFQAPYLLHGKYVKEQEQ) the chain is Mitochondrial intermembrane.

The protein belongs to the MICOS complex subunit Mic10 family. Component of the mitochondrial contact site and cristae organizing system (MICOS) complex, composed of at least MICOS10/MIC10, CHCHD3/MIC19, CHCHD6/MIC25, APOOL/MIC27, IMMT/MIC60, APOO/MIC23/MIC26 and MICOS13/MIC13. This complex was also known under the names MINOS or MitOS complex. The MICOS complex associates with mitochondrial outer membrane proteins SAMM50, MTX1 and MTX2 (together described as components of the mitochondrial outer membrane sorting assembly machinery (SAM) complex) and DNAJC11, mitochondrial inner membrane protein TMEM11 and with HSPA9. The MICOS and SAM complexes together with DNAJC11 are part of a large protein complex spanning both membranes termed the mitochondrial intermembrane space bridging (MIB) complex. Interacts with IMMT/MIC60 and MICOS13/MIC13. Interacts with APOO/MIC23/MIC26 and APOOL/MIC27. Interacts with ARMC1.

The protein localises to the mitochondrion inner membrane. Component of the MICOS complex, a large protein complex of the mitochondrial inner membrane that plays crucial roles in the maintenance of crista junctions, inner membrane architecture, and formation of contact sites to the outer membrane. The polypeptide is MICOS complex subunit MIC10 (Homo sapiens (Human)).